The following is a 153-amino-acid chain: Large ribosomal subunit protein uL22 (153 aa).

Belongs to the universal ribosomal protein uL22 family. As to quaternary structure, part of the 50S ribosomal subunit.

Its function is as follows. This protein binds specifically to 23S rRNA. It makes multiple contacts with different domains of the 23S rRNA in the assembled 50S subunit and ribosome. In terms of biological role, the globular domain of the protein is located near the polypeptide exit tunnel on the outside of the subunit, while an extended beta-hairpin is found that lines the wall of the exit tunnel in the center of the 70S ribosome. In Methanoculleus marisnigri (strain ATCC 35101 / DSM 1498 / JR1), this protein is Large ribosomal subunit protein uL22.